Here is an 89-residue protein sequence, read N- to C-terminus: Small ribosomal subunit protein uS15 (89 aa).

It belongs to the universal ribosomal protein uS15 family. Part of the 30S ribosomal subunit. Forms a bridge to the 50S subunit in the 70S ribosome, contacting the 23S rRNA.

In terms of biological role, one of the primary rRNA binding proteins, it binds directly to 16S rRNA where it helps nucleate assembly of the platform of the 30S subunit by binding and bridging several RNA helices of the 16S rRNA. Its function is as follows. Forms an intersubunit bridge (bridge B4) with the 23S rRNA of the 50S subunit in the ribosome. The polypeptide is Small ribosomal subunit protein uS15 (Tolumonas auensis (strain DSM 9187 / NBRC 110442 / TA 4)).